We begin with the raw amino-acid sequence, 99 residues long: NADH-ubiquinone oxidoreductase chain 4L (99 aa).

3 helical membrane-spanning segments follow: residues 4–24 (MFLM…VFVS), 29–49 (LLST…FLFF), and 63–83 (FFLT…VSMI).

This sequence belongs to the complex I subunit 4L family.

Its subcellular location is the mitochondrion membrane. The catalysed reaction is a ubiquinone + NADH + 5 H(+)(in) = a ubiquinol + NAD(+) + 4 H(+)(out). In terms of biological role, core subunit of the mitochondrial membrane respiratory chain NADH dehydrogenase (Complex I) that is believed to belong to the minimal assembly required for catalysis. Complex I functions in the transfer of electrons from NADH to the respiratory chain. The immediate electron acceptor for the enzyme is believed to be ubiquinone. This chain is NADH-ubiquinone oxidoreductase chain 4L (ND4L), found in Anopheles quadrimaculatus (Common malaria mosquito).